The following is a 447-amino-acid chain: Glucose-6-phosphate isomerase (447 aa).

The active-site Proton donor is the Glu-289. Catalysis depends on residues His-310 and Lys-424.

This sequence belongs to the GPI family.

The protein localises to the cytoplasm. The catalysed reaction is alpha-D-glucose 6-phosphate = beta-D-fructose 6-phosphate. It functions in the pathway carbohydrate biosynthesis; gluconeogenesis. The protein operates within carbohydrate degradation; glycolysis; D-glyceraldehyde 3-phosphate and glycerone phosphate from D-glucose: step 2/4. Catalyzes the reversible isomerization of glucose-6-phosphate to fructose-6-phosphate. The chain is Glucose-6-phosphate isomerase from Parabacteroides distasonis (strain ATCC 8503 / DSM 20701 / CIP 104284 / JCM 5825 / NCTC 11152).